Reading from the N-terminus, the 421-residue chain is Gamma-glutamyl phosphate reductase (421 aa).

This sequence belongs to the gamma-glutamyl phosphate reductase family.

The protein localises to the cytoplasm. It carries out the reaction L-glutamate 5-semialdehyde + phosphate + NADP(+) = L-glutamyl 5-phosphate + NADPH + H(+). It participates in amino-acid biosynthesis; L-proline biosynthesis; L-glutamate 5-semialdehyde from L-glutamate: step 2/2. In terms of biological role, catalyzes the NADPH-dependent reduction of L-glutamate 5-phosphate into L-glutamate 5-semialdehyde and phosphate. The product spontaneously undergoes cyclization to form 1-pyrroline-5-carboxylate. This Roseobacter denitrificans (strain ATCC 33942 / OCh 114) (Erythrobacter sp. (strain OCh 114)) protein is Gamma-glutamyl phosphate reductase.